We begin with the raw amino-acid sequence, 630 residues long: Plastin-3 (630 aa).

2 EF-hand domains span residues aspartate 12–proline 47 and lysine 52–serine 87. 9 residues coordinate Ca(2+): aspartate 25, asparagine 27, asparagine 29, glutamate 36, aspartate 65, asparagine 67, aspartate 69, lysine 71, and glutamate 76. Actin-binding regions lie at residues threonine 109 to lysine 382 and proline 383 to methionine 627. 2 consecutive Calponin-homology (CH) domains span residues glutamate 123–leucine 239 and leucine 267–proline 378. 4 positions are modified to phosphoserine: serine 268, serine 293, serine 326, and serine 339. Position 391 is a phosphothreonine (threonine 391). Calponin-homology (CH) domains lie at threonine 397–threonine 506 and lysine 518–methionine 627.

As to quaternary structure, monomer. As to expression, expressed in a variety of organs, including muscle, brain, uterus and esophagus.

The protein resides in the cytoplasm. Its function is as follows. Actin-bundling protein. The sequence is that of Plastin-3 (PLS3) from Homo sapiens (Human).